A 400-amino-acid chain; its full sequence is CCA-adding enzyme (400 aa).

The ATP site is built by glycine 8 and arginine 11. CTP is bound by residues glycine 8 and arginine 11. Aspartate 21 and aspartate 23 together coordinate Mg(2+). ATP-binding residues include arginine 91, arginine 137, and arginine 140. Residues arginine 91, arginine 137, and arginine 140 each coordinate CTP. Residues 217-322 (NFQYAMTALK…IDLFNKWDVW (106 aa)) enclose the HD domain.

Belongs to the tRNA nucleotidyltransferase/poly(A) polymerase family. Bacterial CCA-adding enzyme type 2 subfamily. Mg(2+) is required as a cofactor.

It carries out the reaction a tRNA precursor + 2 CTP + ATP = a tRNA with a 3' CCA end + 3 diphosphate. The catalysed reaction is a tRNA with a 3' CCA end + 2 CTP + ATP = a tRNA with a 3' CCACCA end + 3 diphosphate. In terms of biological role, catalyzes the addition and repair of the essential 3'-terminal CCA sequence in tRNAs without using a nucleic acid template. Adds these three nucleotides in the order of C, C, and A to the tRNA nucleotide-73, using CTP and ATP as substrates and producing inorganic pyrophosphate. tRNA 3'-terminal CCA addition is required both for tRNA processing and repair. Also involved in tRNA surveillance by mediating tandem CCA addition to generate a CCACCA at the 3' terminus of unstable tRNAs. While stable tRNAs receive only 3'-terminal CCA, unstable tRNAs are marked with CCACCA and rapidly degraded. The protein is CCA-adding enzyme of Actinobacillus succinogenes (strain ATCC 55618 / DSM 22257 / CCUG 43843 / 130Z).